We begin with the raw amino-acid sequence, 438 residues long: MLQVATPTATEETQTVIEIEGRASLKGEVRISGAKNSALAIMAGTILCSDDCRLSNLPALADIDKMCQILAAIGVNLERDGDRLVVDSSNVGHGPAPYELVSQLRASFFVIGPLLSRLGMTKVPLPGGCAIGTRPVDLHVRGLQAMGADVHIEHGVVNASIKGHSRRLTGAKIYLDYPSVGATETILMAATLAEGETVIDNAAREPEIVDLANFCRSMGAQIRGDGSSRIIINGVEKLHSTDFPIIPDRIEAATFLCAGAITHSEISLFPVVPDHLASAIAKLREIGPEVAIDAPDRVRLIPRDLRGTDIETLPYPGFPTDMQAQFMALLAVSEGNSVVTETVFENRLQHVAELQRMGANIKLKGNAAFIQGVPFLSGAPVMSTDLRASAALVIAGLAAEGKTIVQGLRHLDRGYEDIEGKLRKLGAKLTRIEQPVTL.

Position 35–36 (35–36 (KN)) interacts with phosphoenolpyruvate. Arg-105 is a binding site for UDP-N-acetyl-alpha-D-glucosamine. Cys-129 acts as the Proton donor in catalysis. Cys-129 is modified (2-(S-cysteinyl)pyruvic acid O-phosphothioketal). UDP-N-acetyl-alpha-D-glucosamine-binding positions include 134 to 138 (RPVDL), Asp-321, and Val-343.

It belongs to the EPSP synthase family. MurA subfamily.

It localises to the cytoplasm. It catalyses the reaction phosphoenolpyruvate + UDP-N-acetyl-alpha-D-glucosamine = UDP-N-acetyl-3-O-(1-carboxyvinyl)-alpha-D-glucosamine + phosphate. Its pathway is cell wall biogenesis; peptidoglycan biosynthesis. Its function is as follows. Cell wall formation. Adds enolpyruvyl to UDP-N-acetylglucosamine. This is UDP-N-acetylglucosamine 1-carboxyvinyltransferase from Synechocystis sp. (strain ATCC 27184 / PCC 6803 / Kazusa).